A 1734-amino-acid polypeptide reads, in one-letter code: Protein TIC 214 (1734 aa).

6 helical membrane passes run 19-39 (IINS…FSIG), 68-88 (FIAG…HLAL), 91-111 (PHTI…WNNH), 133-153 (VFLN…SSML), 176-196 (VGWL…LVWI), and 227-247 (IFSI…PSPI). A coiled-coil region spans residues 1433–1485 (NLNNEEKELADEVELESDNEKQINPESALSNQEKTIQEIYAESKKKKRQNKKQ).

Belongs to the TIC214 family. In terms of assembly, part of the Tic complex.

Its subcellular location is the plastid. The protein resides in the chloroplast inner membrane. Involved in protein precursor import into chloroplasts. May be part of an intermediate translocation complex acting as a protein-conducting channel at the inner envelope. The polypeptide is Protein TIC 214 (Lepidium virginicum (Virginia pepperweed)).